The sequence spans 225 residues: Cytidylate kinase (225 aa).

10–18 (GPASSGKST) contacts ATP.

This sequence belongs to the cytidylate kinase family. Type 1 subfamily.

It localises to the cytoplasm. The enzyme catalyses CMP + ATP = CDP + ADP. It carries out the reaction dCMP + ATP = dCDP + ADP. This Streptococcus sanguinis (strain SK36) protein is Cytidylate kinase.